A 493-amino-acid polypeptide reads, in one-letter code: Signal recognition particle subunit SRP54 3 (493 aa).

A G-domain region spans residues 1–294 (MVLADVGGSI…NVEPFVARLL (294 aa)). GTP-binding positions include 107–114 (GLQGSGKT), 189–193 (DTSGR), and 247–250 (TKLD). The interval 295–493 (GRGDLPGLID…KMLAGMRGGA (199 aa)) is M-domain.

It belongs to the GTP-binding SRP family. SRP54 subfamily. Component of a signal recognition particle (SRP) complex that consists of a 7SL RNA molecule of 300 nucleotides and six protein subunits: SRP72, SRP68, SRP54, SRP19, SRP14 and SRP9.

It is found in the cytoplasm. The protein resides in the endoplasmic reticulum. The enzyme catalyses GTP + H2O = GDP + phosphate + H(+). Component of the signal recognition particle (SRP) complex, a ribonucleoprotein complex that mediates the cotranslational targeting of secretory and membrane proteins to the endoplasmic reticulum (ER). As part of the SRP complex, associates with the SRP receptor (SR) component SRPRA to target secretory proteins to the endoplasmic reticulum membrane. Binds to the signal sequence of presecretory proteins when they emerge from the ribosomes. Displays basal GTPase activity, and stimulates reciprocal GTPase activation of the SR subunit SRPRA. Forms a guanosine 5'-triphosphate (GTP)-dependent complex with the SR subunit SRPRA. SR compaction and GTPase mediated rearrangement of SR drive SRP-mediated cotranslational protein translocation into the ER. Requires the presence of SRP9/SRP14 and/or SRP19 to stably interact with RNA. The polypeptide is Signal recognition particle subunit SRP54 3 (SRP54-3) (Hordeum vulgare (Barley)).